Consider the following 233-residue polypeptide: Protein-methionine-sulfoxide reductase heme-binding subunit MsrQ (233 aa).

Helical transmembrane passes span 13 to 33 (IKAA…HGLW), 44 to 64 (ALTR…LCVS), 81 to 101 (MLGL…LWLD), 117 to 137 (PFIT…LTSS), 151 to 171 (SLHR…LWLV), and 174 to 194 (VALL…GWRV). The region spanning 50-164 (GIWTLNFLFL…AVYAVAILGV (115 aa)) is the Ferric oxidoreductase domain.

This sequence belongs to the MsrQ family. Heterodimer of a catalytic subunit (MsrP) and a heme-binding subunit (MsrQ).

It is found in the cell inner membrane. Part of the MsrPQ system that repairs oxidized periplasmic proteins containing methionine sulfoxide residues (Met-O), using respiratory chain electrons. Thus protects these proteins from oxidative-stress damage caused by reactive species of oxygen and chlorine generated by the host defense mechanisms. MsrPQ is essential for the maintenance of envelope integrity under bleach stress, rescuing a wide series of structurally unrelated periplasmic proteins from methionine oxidation. MsrQ provides electrons for reduction to the reductase catalytic subunit MsrP, using the quinone pool of the respiratory chain. Probably involved in protection against reactive chlorine species (RCS) generated by chlorite and hypochlorite. The sequence is that of Protein-methionine-sulfoxide reductase heme-binding subunit MsrQ from Azospira oryzae (strain ATCC BAA-33 / DSM 13638 / PS) (Dechlorosoma suillum).